Here is an 807-residue protein sequence, read N- to C-terminus: F-box protein YLR352W (807 aa).

One can recognise an F-box domain in the interval 220–266 (LNDCIDLPSHVLWKILKMLPELQKLDLSHTSIDDSTLYHGIPHWKNL). Over residues 607 to 616 (DNNSHVEDSQ) the composition is skewed to basic and acidic residues. 2 disordered regions span residues 607 to 647 (DNNS…NPFA) and 716 to 739 (HLFESSRSRSGNKTRPSLTGEHSS). Composition is skewed to polar residues over residues 627–644 (SLLSRPTLRSNNGSSSAN) and 723–736 (SRSGNKTRPSLTGE).

Interacts with SKP1 and CDC53. Component of the probable SCF(YBR352W) complex containing CDC53, SKP1, RBX1 and YBR352W.

The protein operates within protein modification; protein ubiquitination. In terms of biological role, substrate recognition component of a SCF (SKP1-CUL1-F-box protein) E3 ubiquitin-protein ligase complex which mediates the ubiquitination and subsequent proteasomal degradation of target proteins. Probably recognizes and binds to phosphorylated target proteins. The polypeptide is F-box protein YLR352W (Saccharomyces cerevisiae (strain ATCC 204508 / S288c) (Baker's yeast)).